A 757-amino-acid chain; its full sequence is RNA-directed RNA polymerase catalytic subunit (757 aa).

The segment at 52–82 (KGKWTTNTETGAPQLNPIDGPLPEDNEPSGY) is disordered. A compositionally biased stretch (polar residues) spans 55–64 (WTTNTETGAP). 2 short sequence motifs (nuclear localization signal) span residues 187–195 (RKRRVRDNM) and 203–216 (RTIG…NKKS). Residues 249-256 (RGFVYFVE) are promoter-binding site. A RdRp catalytic domain is found at 286 to 483 (VRKMMTNSQD…GINMSKKKSY (198 aa)).

This sequence belongs to the influenza viruses polymerase PB1 family. In terms of assembly, influenza RNA polymerase is composed of three subunits: PB1, PB2 and PA. Interacts (via N-terminus) with PA (via C-terminus). Interacts (via C-terminus) with PB2 (via N-terminus); this interaction is essential for transcription initiation. In terms of processing, phosphorylated by host PRKCA.

The protein resides in the host nucleus. It localises to the host cytoplasm. The enzyme catalyses RNA(n) + a ribonucleoside 5'-triphosphate = RNA(n+1) + diphosphate. RNA-dependent RNA polymerase which is responsible for replication and transcription of virus RNA segments. The transcription of viral mRNAs occurs by a unique mechanism called cap-snatching. 5' methylated caps of cellular mRNAs are cleaved after 10-13 nucleotides by PA. In turn, these short capped RNAs are used as primers by PB1 for transcription of viral mRNAs. During virus replication, PB1 initiates RNA synthesis and copy vRNA into complementary RNA (cRNA) which in turn serves as a template for the production of more vRNAs. This chain is RNA-directed RNA polymerase catalytic subunit, found in Aves (Cat).